The sequence spans 156 residues: ATP synthase subunit b (156 aa).

The helical transmembrane segment at 4-26 threads the bilayer; the sequence is GATFWGPMISFALFVWFTMKYVW.

This sequence belongs to the ATPase B chain family. In terms of assembly, F-type ATPases have 2 components, F(1) - the catalytic core - and F(0) - the membrane proton channel. F(1) has five subunits: alpha(3), beta(3), gamma(1), delta(1), epsilon(1). F(0) has three main subunits: a(1), b(2) and c(10-14). The alpha and beta chains form an alternating ring which encloses part of the gamma chain. F(1) is attached to F(0) by a central stalk formed by the gamma and epsilon chains, while a peripheral stalk is formed by the delta and b chains.

The protein localises to the cell inner membrane. In terms of biological role, f(1)F(0) ATP synthase produces ATP from ADP in the presence of a proton or sodium gradient. F-type ATPases consist of two structural domains, F(1) containing the extramembraneous catalytic core and F(0) containing the membrane proton channel, linked together by a central stalk and a peripheral stalk. During catalysis, ATP synthesis in the catalytic domain of F(1) is coupled via a rotary mechanism of the central stalk subunits to proton translocation. Component of the F(0) channel, it forms part of the peripheral stalk, linking F(1) to F(0). In Alkalilimnicola ehrlichii (strain ATCC BAA-1101 / DSM 17681 / MLHE-1), this protein is ATP synthase subunit b.